We begin with the raw amino-acid sequence, 285 residues long: MKYIGAHVSAAGGLANAAIRAAEIDATAFALFTKNQRQWRAAPLTTQTIDEFKAACEKYHYTSAQILPHDSYLINLGHPVAEALEKSRDAFIDEMQRCEQLGLSLLNFHPGSHLMQISEEDCLARIAESINIALDKTEGVTAVIENTAGQGSNLGFKFEHLAAIIAGVEDKSRVGVCIDTCHAFAAGYDLRTPAECEKTFAEFERIVGFKYLRGMHLNDAKSTFGSRVDRHHSLGEGNIGHDAFRWIMQDARFDGIPLILETINPDIWAEEIAWLKAQQTEKAVA.

The Zn(2+) site is built by His69, His109, Glu145, Asp179, His182, His216, Asp229, His231, and Glu261.

Belongs to the AP endonuclease 2 family. Zn(2+) serves as cofactor.

It catalyses the reaction Endonucleolytic cleavage to 5'-phosphooligonucleotide end-products.. Endonuclease IV plays a role in DNA repair. It cleaves phosphodiester bonds at apurinic or apyrimidinic (AP) sites, generating a 3'-hydroxyl group and a 5'-terminal sugar phosphate. The polypeptide is Probable endonuclease 4 (Escherichia fergusonii (strain ATCC 35469 / DSM 13698 / CCUG 18766 / IAM 14443 / JCM 21226 / LMG 7866 / NBRC 102419 / NCTC 12128 / CDC 0568-73)).